The chain runs to 282 residues: Nucleotide-binding protein PXO_02223 (282 aa).

5–12 (GLSGSGKS) serves as a coordination point for ATP. 57–60 (DVRS) is a GTP binding site.

This sequence belongs to the RapZ-like family.

In terms of biological role, displays ATPase and GTPase activities. The chain is Nucleotide-binding protein PXO_02223 from Xanthomonas oryzae pv. oryzae (strain PXO99A).